The primary structure comprises 775 residues: MDFIDFDSFQQDEIPQPQPALSLPITSNIENLGKRFSNFNSLTKNLLKFDEKDDIKVDGDESEETKLAEKYANLSLNLINSLEDDNEEENESDLNRSKTTTTLSTRLSRVLNNSMPDSLVREIFANLDLKIENIAALVEPGITGSNSRKKLRGEIENDLIKTQGLMLKEYQPVIKNLSNLENDLKNLNGLRDSITEKVNKDFQSTKDLNGEVKNLNDTKSLINLKKGLLISFQNKFALDVYEEYVLQNGEINDEFFQVLIKCEKIHENCSILLSVDNPQLGLKIMSKFNQLINKSVERIINFTNKTLNNLYSLNTTTKLTTLHQCLKFLRKRLNYFNTVIDNFVDTRSRLIIDEFLNQINGDLDKSGDNRSGSIQHDRPIILSAHDPVRFIGDLLAYIHSVVVNETETISSIFGISKEENEDDDIEYKDIIDDVTGRILNSLSRSVKSKIEQVITSETKLATIYAIYSLVELYTIMFAKHLKESSNDKHNLLMTVRELVSSSQNKIISIIQNKLTTIKSSNSAQLELNTDLQPPEWIIEFYSDILPIIDQNTSDTFMNLSTENNAEFMKMIINKPIEIFNEHIENNISKLFNRRDQVILKLNFLDLILSKIMPIILLSDKILELNDLTEKLSLELTNLQLDSLISGCQLTNFYNIINMICPFSDDFFDVSIYQPITENKLFSEDNIIAANDIIQNFLPSALLDIQQSLFKVNSPMIVNNIITNSSLEFIKFYLKFNLIINEYLDDASLIWSDIEVATLLGVEEPYQQTKKSMSFD.

Belongs to the COG6 family.

Its subcellular location is the golgi apparatus membrane. Its function is as follows. Acts as a component of the peripheral membrane COG complex that is involved in intra-Golgi protein trafficking. COG is located at the cis-Golgi, and regulates tethering of retrograde intra-Golgi vesicles and possibly a number of other membrane trafficking events. The chain is Conserved oligomeric Golgi complex subunit 6 (COG6) from Debaryomyces hansenii (strain ATCC 36239 / CBS 767 / BCRC 21394 / JCM 1990 / NBRC 0083 / IGC 2968) (Yeast).